A 338-amino-acid polypeptide reads, in one-letter code: Methionine import ATP-binding protein MetN 1 (338 aa).

Positions 2–241 (IELHQVSKSF…AKHATTKRFV (240 aa)) constitute an ABC transporter domain. 38–45 (GYSGAGKS) serves as a coordination point for ATP.

This sequence belongs to the ABC transporter superfamily. Methionine importer (TC 3.A.1.24) family. In terms of assembly, the complex is composed of two ATP-binding proteins (MetN), two transmembrane proteins (MetI) and a solute-binding protein (MetQ).

It is found in the cell membrane. The enzyme catalyses L-methionine(out) + ATP + H2O = L-methionine(in) + ADP + phosphate + H(+). It carries out the reaction D-methionine(out) + ATP + H2O = D-methionine(in) + ADP + phosphate + H(+). Its function is as follows. Part of the ABC transporter complex MetNIQ involved in methionine import. Responsible for energy coupling to the transport system. This chain is Methionine import ATP-binding protein MetN 1, found in Listeria monocytogenes serovar 1/2a (strain ATCC BAA-679 / EGD-e).